The primary structure comprises 1141 residues: DNA-directed RNA polymerase subunit beta (1141 aa).

Belongs to the RNA polymerase beta chain family. The RNAP catalytic core consists of 2 alpha, 1 beta, 1 beta' and 1 omega subunit. When a sigma factor is associated with the core the holoenzyme is formed, which can initiate transcription.

The catalysed reaction is RNA(n) + a ribonucleoside 5'-triphosphate = RNA(n+1) + diphosphate. Its function is as follows. DNA-dependent RNA polymerase catalyzes the transcription of DNA into RNA using the four ribonucleoside triphosphates as substrates. The polypeptide is DNA-directed RNA polymerase subunit beta (Frankia alni (strain DSM 45986 / CECT 9034 / ACN14a)).